The chain runs to 298 residues: Probable tRNA(His) guanylyltransferase (298 aa).

Mg(2+) contacts are provided by Asp-58, Gly-59, and Asp-105. GTP is bound by residues Asp-58 to His-63 and Ser-104 to Asp-105.

It belongs to the tRNA(His) guanylyltransferase family. As to quaternary structure, homotetramer. Interacts with MFN1 and MFN2; functions as a guanyl-nucleotide exchange factor/GEF for MFN2 and also probably MFN1. It depends on Mg(2+) as a cofactor. In terms of tissue distribution, expressed in many tissues.

The protein localises to the cytoplasm. Its subcellular location is the mitochondrion outer membrane. The enzyme catalyses a 5'-end ribonucleotide-tRNA(His) + GTP + ATP + H2O = a 5'-end phospho-guanosine-ribonucleotide-tRNA(His) + AMP + 2 diphosphate + H(+). In terms of biological role, adds a GMP to the 5'-end of tRNA(His) after transcription and RNase P cleavage. This step is essential for proper recognition of the tRNA and for the fidelity of protein synthesis. Also functions as a guanyl-nucleotide exchange factor/GEF for the MFN1 and MFN2 mitofusins thereby regulating mitochondrial fusion. By regulating both mitochondrial dynamics and bioenergetic function, it contributes to cell survival following oxidative stress. This Homo sapiens (Human) protein is Probable tRNA(His) guanylyltransferase (THG1L).